Consider the following 226-residue polypeptide: UPF0111 protein AF_1799 (226 aa).

The protein belongs to the UPF0111 family.

This chain is UPF0111 protein AF_1799, found in Archaeoglobus fulgidus (strain ATCC 49558 / DSM 4304 / JCM 9628 / NBRC 100126 / VC-16).